The following is a 250-amino-acid chain: NAD(P)H-quinone oxidoreductase subunit K (250 aa).

C60, C61, C125, and C156 together coordinate [4Fe-4S] cluster. The disordered stretch occupies residues 230-250 (ELNTSEIDASPASQPSSTYES). Positions 231 to 250 (LNTSEIDASPASQPSSTYES) are enriched in polar residues.

It belongs to the complex I 20 kDa subunit family. NDH-1 can be composed of about 15 different subunits; different subcomplexes with different compositions have been identified which probably have different functions. It depends on [4Fe-4S] cluster as a cofactor.

The protein resides in the cellular thylakoid membrane. It catalyses the reaction a plastoquinone + NADH + (n+1) H(+)(in) = a plastoquinol + NAD(+) + n H(+)(out). The catalysed reaction is a plastoquinone + NADPH + (n+1) H(+)(in) = a plastoquinol + NADP(+) + n H(+)(out). Functionally, NDH-1 shuttles electrons from an unknown electron donor, via FMN and iron-sulfur (Fe-S) centers, to quinones in the respiratory and/or the photosynthetic chain. The immediate electron acceptor for the enzyme in this species is believed to be plastoquinone. Couples the redox reaction to proton translocation, and thus conserves the redox energy in a proton gradient. Cyanobacterial NDH-1 also plays a role in inorganic carbon-concentration. This chain is NAD(P)H-quinone oxidoreductase subunit K, found in Prochlorococcus marinus (strain MIT 9303).